An 801-amino-acid chain; its full sequence is Cadherin-20 (801 aa).

An N-terminal signal peptide occupies residues 1–34 (MWTSGRMSNAKNWLGLGMSLYFWGLMDLTTTVLS). Residues 35–59 (DTPTPQGELEALLSDKPQSHQRTKR) constitute a propeptide that is removed on maturation. The Extracellular portion of the chain corresponds to 60–619 (SWVWNQFFVL…AYMLPVSLSR (560 aa)). Cadherin domains lie at 61-165 (WVWN…EPKF), 166-274 (LDGP…PPRF), 275-389 (PQKH…PPVF), 390-494 (EPGF…APEF), and 494-610 (FPRF…SPEA). N-linked (GlcNAc...) asparagine glycosylation occurs at asparagine 261. N-linked (GlcNAc...) asparagine glycosylation is found at asparagine 420, asparagine 461, and asparagine 542. Residues 620–640 (GALIAILACIFVLLVLVLLIL) traverse the membrane as a helical segment. At 641-801 (SMRRHRKQPY…GASEGPAPLW (161 aa)) the chain is on the cytoplasmic side.

As to expression, expressed in placenta, adult brain, and fetal brain.

Its subcellular location is the cell membrane. Cadherins are calcium-dependent cell adhesion proteins. They preferentially interact with themselves in a homophilic manner in connecting cells; cadherins may thus contribute to the sorting of heterogeneous cell types. The chain is Cadherin-20 (CDH20) from Homo sapiens (Human).